Here is a 147-residue protein sequence, read N- to C-terminus: Putative cystatin-9-like protein CST9LP1 (147 aa).

The signal sequence occupies residues 1 to 28; sequence MWSLPPSRALSCAPLLLLFSFQFLVTYA. A disulfide bridge connects residues cysteine 98 and cysteine 108. Asparagine 117 and asparagine 139 each carry an N-linked (GlcNAc...) asparagine glycan. Cysteine 122 and cysteine 142 are disulfide-bonded.

It belongs to the cystatin family.

It is found in the secreted. In Homo sapiens (Human), this protein is Putative cystatin-9-like protein CST9LP1 (CST9LP1).